A 347-amino-acid chain; its full sequence is Lipopolysaccharide core heptosyltransferase OpsX (347 aa).

This sequence belongs to the glycosyltransferase 9 family.

It functions in the pathway bacterial outer membrane biogenesis; LPS core biosynthesis. Catalyzes heptose transfer to the lipopolysaccharide core. It transfers the first L-glycero-D-manno-heptose to the phosphorylated 3-deoxy-alpha-D-manno-octulosonic acid (Kdo-P) of the inner core. This chain is Lipopolysaccharide core heptosyltransferase OpsX, found in Haemophilus influenzae (strain ATCC 51907 / DSM 11121 / KW20 / Rd).